The primary structure comprises 467 residues: UDP-N-acetylmuramoylalanine--D-glutamate ligase (467 aa).

121–127 serves as a coordination point for ATP; sequence GTNGKST.

It belongs to the MurCDEF family.

It localises to the cytoplasm. It catalyses the reaction UDP-N-acetyl-alpha-D-muramoyl-L-alanine + D-glutamate + ATP = UDP-N-acetyl-alpha-D-muramoyl-L-alanyl-D-glutamate + ADP + phosphate + H(+). It functions in the pathway cell wall biogenesis; peptidoglycan biosynthesis. Cell wall formation. Catalyzes the addition of glutamate to the nucleotide precursor UDP-N-acetylmuramoyl-L-alanine (UMA). This chain is UDP-N-acetylmuramoylalanine--D-glutamate ligase, found in Brucella abortus (strain 2308).